A 253-amino-acid chain; its full sequence is UPF0758 protein Bxeno_A3578 (253 aa).

Residues 131–253 (LINSPEAVEN…VYSFARAGWP (123 aa)) enclose the MPN domain. Residues histidine 202, histidine 204, and aspartate 215 each coordinate Zn(2+). Positions 202–215 (HNHPSGAVQPSASD) match the JAMM motif motif.

The protein belongs to the UPF0758 family.

The sequence is that of UPF0758 protein Bxeno_A3578 from Paraburkholderia xenovorans (strain LB400).